A 169-amino-acid chain; its full sequence is S-ribosylhomocysteine lyase (169 aa).

Fe cation-binding residues include H54, H58, and C128.

Belongs to the LuxS family. As to quaternary structure, homodimer. Fe cation is required as a cofactor.

It carries out the reaction S-(5-deoxy-D-ribos-5-yl)-L-homocysteine = (S)-4,5-dihydroxypentane-2,3-dione + L-homocysteine. Involved in the synthesis of autoinducer 2 (AI-2) which is secreted by bacteria and is used to communicate both the cell density and the metabolic potential of the environment. The regulation of gene expression in response to changes in cell density is called quorum sensing. Catalyzes the transformation of S-ribosylhomocysteine (RHC) to homocysteine (HC) and 4,5-dihydroxy-2,3-pentadione (DPD). The protein is S-ribosylhomocysteine lyase of Shewanella sp. (strain ANA-3).